The chain runs to 389 residues: Exodeoxyribonuclease 7 large subunit (389 aa).

Belongs to the XseA family. In terms of assembly, heterooligomer composed of large and small subunits.

It is found in the cytoplasm. The enzyme catalyses Exonucleolytic cleavage in either 5'- to 3'- or 3'- to 5'-direction to yield nucleoside 5'-phosphates.. Bidirectionally degrades single-stranded DNA into large acid-insoluble oligonucleotides, which are then degraded further into small acid-soluble oligonucleotides. The sequence is that of Exodeoxyribonuclease 7 large subunit from Pseudothermotoga lettingae (strain ATCC BAA-301 / DSM 14385 / NBRC 107922 / TMO) (Thermotoga lettingae).